The following is a 527-amino-acid chain: MTQQAAEVAKRRTFAIISHPDAGKTTITEKLLLMGKAIAVAGTVKSRKSDRHATSDWMEMEKQRGISITTSVMQFPYREHMINLLDTPGHEDFSEDTYRTLTAVDSALMVLDGGKGVEPRTIALMDVCRLRDTPIVSFINKLDRDIRDPIELLDEIEAVLKIKAAPITWPIGCYRDFKGVYHLAGDYIIVYTPGHGHERTETKIIEKLDSAEARAHLGDEYERFIEQLELVQGACHEFNQQEFLDGQLTPVFFGTALGNFGVDHVLDAVVDWAPLPLARVANERSVAPQEEKFSGFIFKIQANMDPKHRDRIAFMRICSGKYEKGMKMRHVRTGKDVRIGDALTFFSSEREQLEEAYAGDIIGLHNHGTIQIGDTFTEGEALGFTGIPHFAPELFRRVRLKDPLKSKQLRQGLQQLAEEGATQVFFPERSNDIILGAVGVLQFDVVASRLKEEYKVECSYEPITVWSARWIECSDKKKLEEFSNKAVENLALDGGGHLTYLAPTRVNLALMEERWPDVKFRATREHH.

A tr-type G domain is found at 9 to 277; sequence AKRRTFAIIS…AVVDWAPLPL (269 aa). GTP-binding positions include 18–25, 86–90, and 140–143; these read SHPDAGKT, DTPGH, and NKLD.

The protein belongs to the TRAFAC class translation factor GTPase superfamily. Classic translation factor GTPase family. PrfC subfamily.

The protein localises to the cytoplasm. Its function is as follows. Increases the formation of ribosomal termination complexes and stimulates activities of RF-1 and RF-2. It binds guanine nucleotides and has strong preference for UGA stop codons. It may interact directly with the ribosome. The stimulation of RF-1 and RF-2 is significantly reduced by GTP and GDP, but not by GMP. This Pseudomonas fluorescens (strain ATCC BAA-477 / NRRL B-23932 / Pf-5) protein is Peptide chain release factor 3.